Consider the following 451-residue polypeptide: Opioid growth factor receptor-like protein 1 (451 aa).

2 disordered regions span residues 1–89 (MGNL…TAKP) and 308–451 (ENFI…VLVQ). Low complexity predominate over residues 43-66 (PGQESEQPAQPPEQAGGRPGASPA). A compositionally biased stretch (polar residues) spans 322–341 (GSKAQKMSSPLASSHNSQTS). 2 stretches are compositionally biased toward basic and acidic residues: residues 362 to 381 (TAEDKKVAPKEPVEETDRPS) and 389 to 399 (AKPRNTEKDSN). The span at 431–443 (NDNQDNENPGNTN) shows a compositional bias: low complexity.

It belongs to the opioid growth factor receptor family. Ubiquitous.

The chain is Opioid growth factor receptor-like protein 1 (OGFRL1) from Homo sapiens (Human).